A 117-amino-acid chain; its full sequence is uncharacterized protein (117 aa).

A run of 2 helical transmembrane segments spans residues 43-63 and 73-93; these read APIM…LMLL and AVQH…VFIV.

It localises to the cell membrane. This is an uncharacterized protein from Bacillus subtilis (strain 168).